The chain runs to 479 residues: Ribosomal lysine N-methyltransferase 2 (479 aa).

Residues 22–325 (PNISICESPE…INEELFLNYG (304 aa)) form the SET domain. Tyrosine 324 serves as a coordination point for S-adenosyl-L-methionine.

It belongs to the class V-like SAM-binding methyltransferase superfamily. RKM2 family.

In terms of biological role, S-adenosyl-L-methionine-dependent protein-lysine N-methyltransferase that trimethylates 60S ribosomal protein L12 (RPL12A and RPL12B) at 'Lys-4' and 'Lys-11'. This is Ribosomal lysine N-methyltransferase 2 from Saccharomyces cerevisiae (strain ATCC 204508 / S288c) (Baker's yeast).